We begin with the raw amino-acid sequence, 524 residues long: Alkaline phosphatase, tissue-nonspecific isozyme (524 aa).

Positions 1–17 (MISPFLVLAIGTCLTNS) are cleaved as a signal peptide. Asp60 lines the Mg(2+) pocket. Asp60 and Ser110 together coordinate Zn(2+). The active-site Phosphoserine intermediate is Ser110. Position 110 is a phosphoserine (Ser110). Cys139 and Cys201 form a disulfide bridge. Asn140 carries N-linked (GlcNAc...) asparagine glycosylation. Thr173 contributes to the Mg(2+) binding site. A glycan (N-linked (GlcNAc...) asparagine) is linked at Asn230. Glu235 contributes to the Ca(2+) binding site. A glycan (N-linked (GlcNAc...) asparagine) is linked at Asn271. The Ca(2+) site is built by Phe290 and Glu291. Asn303 carries N-linked (GlcNAc...) asparagine glycosylation. Asp306 serves as a coordination point for Ca(2+). Glu332 serves as a coordination point for Mg(2+). 4 residues coordinate Zn(2+): Asp337, His341, Asp378, and His379. Residue Asn430 is glycosylated (N-linked (GlcNAc...) asparagine). His454 serves as a coordination point for Zn(2+). The cysteines at positions 489 and 497 are disulfide-linked. Gly501 is lipidated: GPI-anchor amidated glycine. Positions 502 to 524 (SGSAPSPGALLLPLAVLSLRTLF) are cleaved as a propeptide — removed in mature form.

This sequence belongs to the alkaline phosphatase family. Homodimer. The cofactor is Mg(2+). It depends on Zn(2+) as a cofactor. Requires Ca(2+) as cofactor. In terms of processing, N-glycosylated. In terms of tissue distribution, widely expressed. Expressed in DRG neurons and spinal cord neurons.

The protein resides in the cell membrane. It localises to the extracellular vesicle membrane. It is found in the mitochondrion membrane. The protein localises to the mitochondrion intermembrane space. The enzyme catalyses a phosphate monoester + H2O = an alcohol + phosphate. The catalysed reaction is diphosphate + H2O = 2 phosphate + H(+). It carries out the reaction pyridoxal 5'-phosphate + H2O = pyridoxal + phosphate. It catalyses the reaction phosphoethanolamine + H2O = ethanolamine + phosphate. The enzyme catalyses N-phosphocreatine + H2O = creatine + phosphate. The catalysed reaction is ATP + H2O = ADP + phosphate + H(+). It carries out the reaction ADP + H2O = AMP + phosphate + H(+). It catalyses the reaction AMP + H2O = adenosine + phosphate. Its activity is regulated as follows. Phosphatase activity is specifically inhibited by 5-((5-chloro-2-methoxyphenyl)sulfonamido)nicotinamide (SBI-425). Its function is as follows. Alkaline phosphatase that metabolizes various phosphate compounds and plays a key role in skeletal mineralization and adaptive thermogenesis. Has broad substrate specificity and can hydrolyze a considerable variety of compounds: however, only a few substrates, such as diphosphate (inorganic pyrophosphate; PPi), pyridoxal 5'-phosphate (PLP) and N-phosphocreatine are natural substrates. Plays an essential role in skeletal and dental mineralization via its ability to hydrolyze extracellular diphosphate, a potent mineralization inhibitor, to phosphate: it thereby promotes hydroxyapatite crystal formation and increases inorganic phosphate concentration. Acts in a non-redundant manner with PHOSPHO1 in skeletal mineralization: while PHOSPHO1 mediates the initiation of hydroxyapatite crystallization in the matrix vesicles (MVs), ALPL/TNAP catalyzes the spread of hydroxyapatite crystallization in the extracellular matrix. Also promotes dephosphorylation of osteopontin (SSP1), an inhibitor of hydroxyapatite crystallization in its phosphorylated state; it is however unclear whether ALPL/TNAP mediates SSP1 dephosphorylation via a direct or indirect manner. Catalyzes dephosphorylation of PLP to pyridoxal (PL), the transportable form of vitamin B6, in order to provide a sufficient amount of PLP in the brain, an essential cofactor for enzymes catalyzing the synthesis of diverse neurotransmitters. Additionally, also able to mediate ATP degradation in a stepwise manner to adenosine, thereby regulating the availability of ligands for purinergic receptors. Also capable of dephosphorylating microbial products, such as lipopolysaccharides (LPS) as well as other phosphorylated small-molecules, such as poly-inosine:cytosine (poly I:C). Acts as a key regulator of adaptive thermogenesis as part of the futile creatine cycle: localizes to the mitochondria of thermogenic fat cells and acts by mediating hydrolysis of N-phosphocreatine to initiate a futile cycle of creatine dephosphorylation and phosphorylation. During the futile creatine cycle, creatine and N-phosphocreatine are in a futile cycle, which dissipates the high energy charge of N-phosphocreatine as heat without performing any mechanical or chemical work. The polypeptide is Alkaline phosphatase, tissue-nonspecific isozyme (Mus musculus (Mouse)).